The chain runs to 110 residues: Dermcidin (110 aa).

Positions 1-19 are cleaved as a signal peptide; sequence MRFMTLLFLTALAGALVCA. The disordered stretch occupies residues 24 to 70; that stretch reads AASAPGSGNPCHEASAAQKENAGEDPGLARQAPKPRKQRSSLLEKGL. Serine 30 and serine 38 each carry an O-linked (Xyl...) (chondroitin sulfate) serine glycan. The propeptide occupies 50-62; the sequence is GLARQAPKPRKQR. Residues 64-108 traverse the membrane as a helical segment; that stretch reads SLLEKGLDGAKKAVGGLGKLGKDAVEDLESVGKGAVHDVKDVLDS. Residue glutamate 67 coordinates Zn(2+). N6-acetyllysine is present on lysine 68. The Zn(2+) site is built by aspartate 71, aspartate 86, aspartate 90, histidine 100, and aspartate 104. A propeptide is located at residue leucine 110.

Homohexamer. Requires Mn(2+) as cofactor. Zn(2+) serves as cofactor. In terms of tissue distribution, detected in urine (at protein level). Constitutively expressed in eccrine sweat gland cells (at protein level). Secreted into the sweat at a concentration of 1-10 micrograms/ml.

The protein localises to the secreted. The protein resides in the membrane. Functionally, found in sweat, has an antimicrobial activity during early bacterial colonization. The secreted peptide assembles into homohexameric complexes that can associate with and also insert into pathogen membranes. Once inserted in bacteria membranes forms anion channels probably altering the transmembrane potential essential for bacterial survival. Highly effective against E.coli, E.faecalis, S.aureus and C.albicans. Optimal pH and salt concentration resemble the conditions in sweat. Also exhibits proteolytic activity, cleaving on the C-terminal side of Arg and, to a lesser extent, Lys residues. In terms of biological role, promotes survival of neurons and displays phosphatase activity. It may bind IgG. The polypeptide is Dermcidin (Homo sapiens (Human)).